A 451-amino-acid polypeptide reads, in one-letter code: Phosphoglucosamine mutase (451 aa).

Ser102 acts as the Phosphoserine intermediate in catalysis. Mg(2+) contacts are provided by Ser102, Asp244, Asp246, and Asp248. Ser102 is subject to Phosphoserine.

Belongs to the phosphohexose mutase family. It depends on Mg(2+) as a cofactor. Activated by phosphorylation.

It catalyses the reaction alpha-D-glucosamine 1-phosphate = D-glucosamine 6-phosphate. Its function is as follows. Catalyzes the conversion of glucosamine-6-phosphate to glucosamine-1-phosphate. In Lawsonia intracellularis (strain PHE/MN1-00), this protein is Phosphoglucosamine mutase.